A 98-amino-acid chain; its full sequence is MSLIYMNVMMAFTMSLTGLLMYRSHLMSALLCMEGMMLSLFILAALTILNSHFTLANMAPIILLVFAACEAAIGLALLVMISNTYGTDYVQNLNLLQC.

3 consecutive transmembrane segments (helical) span residues 1-21 (MSLIYMNVMMAFTMSLTGLLM), 29-49 (ALLCMEGMMLSLFILAALTIL), and 61-81 (IILLVFAACEAAIGLALLVMI).

Belongs to the complex I subunit 4L family. Core subunit of respiratory chain NADH dehydrogenase (Complex I) which is composed of 45 different subunits.

It is found in the mitochondrion inner membrane. The enzyme catalyses a ubiquinone + NADH + 5 H(+)(in) = a ubiquinol + NAD(+) + 4 H(+)(out). Its function is as follows. Core subunit of the mitochondrial membrane respiratory chain NADH dehydrogenase (Complex I) which catalyzes electron transfer from NADH through the respiratory chain, using ubiquinone as an electron acceptor. Part of the enzyme membrane arm which is embedded in the lipid bilayer and involved in proton translocation. The chain is NADH-ubiquinone oxidoreductase chain 4L (MT-ND4L) from Berardius bairdii (Baird's beaked whale).